The chain runs to 403 residues: Probable protein phosphatase 2C 8 (403 aa).

The tract at residues 42–80 (LGRTASAVAEDDAAKRVRPASDSSSDSSESAKVAPEPTA) is disordered. Low complexity predominate over residues 62 to 71 (SDSSSDSSES). A PPM-type phosphatase domain is found at 90 to 388 (SHGAVSVIGR…DNISVVVVEL (299 aa)). The Mn(2+) site is built by D144, G145, D325, and D379.

It belongs to the PP2C family. Mg(2+) serves as cofactor. Mn(2+) is required as a cofactor.

The enzyme catalyses O-phospho-L-seryl-[protein] + H2O = L-seryl-[protein] + phosphate. The catalysed reaction is O-phospho-L-threonyl-[protein] + H2O = L-threonyl-[protein] + phosphate. This chain is Probable protein phosphatase 2C 8, found in Oryza sativa subsp. japonica (Rice).